The sequence spans 302 residues: Probable 2-(5''-triphosphoribosyl)-3'-dephosphocoenzyme-A synthase 1 (302 aa).

The protein belongs to the CitG/MdcB family.

It carries out the reaction 3'-dephospho-CoA + ATP = 2'-(5''-triphospho-alpha-D-ribosyl)-3'-dephospho-CoA + adenine. In Salmonella typhimurium (strain LT2 / SGSC1412 / ATCC 700720), this protein is Probable 2-(5''-triphosphoribosyl)-3'-dephosphocoenzyme-A synthase 1.